A 614-amino-acid chain; its full sequence is Zinc metalloproteinase-disintegrin-like protein F1 (614 aa).

Positions 1 to 20 (MLQVLLVTICLAVFPYQGSS) are cleaved as a signal peptide. A propeptide spanning residues 21-192 (IILESGNVND…IKASQFILTP (172 aa)) is cleaved from the precursor. A Cys-switch; controls maturation motif is present at residues 167 to 173 (PKKCGVT). E193 is subject to Pyrrolidone carboxylic acid (Glu). Residues 202–398 (KYIKLAIVVD…HTPRCILNEP (197 aa)) enclose the Peptidase M12B domain. An N-linked (GlcNAc...) asparagine glycan is attached at N221. Cystine bridges form between C313–C393, C353–C377, and C355–C360. H338 contacts Zn(2+). The short motif at 338 to 349 (HELGHNLGINHD) is the Metal-binding element. E339 serves as the catalytic Proton acceptor. H342 and H348 together coordinate Zn(2+). The Disintegrin domain occupies 406–492 (PAVCGNYVVE…ECPMDHIQKN (87 aa)). Ca(2+)-binding residues include V408, N411, E415, E418, and D421. 14 cysteine pairs are disulfide-bonded: C409/C438, C420/C433, C422/C428, C432/C455, C446/C452, C451/C477, C464/C484, C471/C503, C496/C508, C515/C565, C530/C575, C543/C553, C560/C601, and C595/C607. The D/ECD-tripeptide signature appears at 470–472 (ECD). Residues D472, E475, and D487 each contribute to the Ca(2+) site. N534 carries N-linked (GlcNAc...) asparagine glycosylation.

This sequence belongs to the venom metalloproteinase (M12B) family. P-III subfamily. P-IIIa sub-subfamily. As to quaternary structure, monomer. It depends on Zn(2+) as a cofactor. N-glycosylated. Post-translationally, the N-terminus is blocked. In terms of tissue distribution, expressed by the venom gland (at protein level). Expressed by the venom gland.

Its subcellular location is the secreted. Its activity is regulated as follows. The alpha-fibrinogenase activity is inhibited by EDTA, but not by pefabloc. Its function is as follows. Zinc metalloprotease that has fibrinogenolytic activity. Does not have hemorrhagic activity in rats. Cleaves insulin B chain at '38-Ala-|-Leu-39' and '40-Tyr-|-Leu-41' bonds. Hydrolyzes only partially and weakly isolated extracellular matrix (ECM) bovine fibronectin and basal membrane (BM) protein human collagen IV in vitro. Murine laminin is not hydrolyzed, neither isolated nor in a solubilized BM preparation. Nidogen is hydrolyzed at '350-Ser-|-Phe-351' bond in a solubilized BM preparation. Hydrolyzes plasma proteins involved in blood coagulation in vitro. Has alpha-fibrinogenase activity cleaving human fibrinogen alpha chain at '432-Lys-|-Leu-433' bond, but does not cleave beta or gamma chains. Does not cleave fibrin. Hydrolyzes only partially bovine prothrombin at '200-Ser-|-Gly-201' bond, factor X (FX) heavy chain, and very slowly, FX light chain and plasminogen in vitro, without activating any of them. Has no effect in plasma thrombin generation. Does not inhibit platelet aggregation induced by collagen in vitro. May have a delayed pathological action as an anticoagulant in envenomed patients after they received serotherapy as it is not recognized by the venom antiserum. The protein is Zinc metalloproteinase-disintegrin-like protein F1 of Vipera ammodytes ammodytes (Western sand viper).